We begin with the raw amino-acid sequence, 1407 residues long: Clustered mitochondria protein (1407 aa).

The span at 1–12 (MAGKSNKSKAKR) shows a compositional bias: basic residues. 2 disordered regions span residues 1 to 36 (MAGKSNKSKAKRAAQSTTTNSTTDVKSDAPAPPVAA) and 83 to 103 (IPKADESESQVENNDAQPKQG). Polar residues predominate over residues 14 to 24 (AQSTTTNSTTD). One can recognise a Clu domain in the interval 384 to 670 (PDHKRDAARA…RVTPRDANYT (287 aa)). Positions 724-760 (IDGEANGASNSDQKSISDKQNTTAEDYAAGSSESSKS) are disordered. The span at 730 to 747 (GASNSDQKSISDKQNTTA) shows a compositional bias: polar residues. TPR repeat units lie at residues 1025–1058 (AKDLVEMGKVQLAEGMLSESYTFFSEAFSILQQV), 1067–1100 (ANCCRYLAMVLYHAGDMAGAIMQQHKELIINERC), 1109–1142 (AHSYGNMALFYHGLNQTELALQNMGRALLLLGLS), 1151–1184 (AATFINVAMMYQDMGKMDTALRYLQEALKKNERL), and 1193–1226 (AVCYHALAIAFNCMGAFKLSHQHEKKTYDILVKQ). Residues 1358–1407 (VSSEKGGENGEAKVQEKKESSENGKTENLAPAGLGAGLTSLDKKKQKAKK) are disordered. The span at 1362 to 1382 (KGGENGEAKVQEKKESSENGK) shows a compositional bias: basic and acidic residues.

It belongs to the CLU family.

It localises to the cytoplasm. In terms of biological role, mRNA-binding protein involved in proper cytoplasmic distribution of mitochondria. Together with REC2, REC3 and FMT/CLU, contributes to the establishment of the cellular volume devoted to the chloroplast compartment. This chain is Clustered mitochondria protein, found in Arabidopsis thaliana (Mouse-ear cress).